A 369-amino-acid polypeptide reads, in one-letter code: Phosphate-binding protein PstS 3 (369 aa).

The first 21 residues, 1-21 (MKLNQFGAAIGLLATGALLSG), serve as a signal peptide directing secretion. Cys-22 is lipidated: N-palmitoyl cysteine. Residue Cys-22 is the site of S-diacylglycerol cysteine attachment. Phosphate contacts are provided by residues 55–57 (STA), Ser-85, Asp-103, and 190–192 (SGT).

It belongs to the PstS family. As to quaternary structure, the complex is composed of two ATP-binding proteins (PstB), two transmembrane proteins (PstC and PstA) and a solute-binding protein (PstS).

It is found in the cell membrane. Part of the ABC transporter complex PstSACB involved in phosphate import. The sequence is that of Phosphate-binding protein PstS 3 (pstS2) from Mycobacterium leprae (strain TN).